Here is a 453-residue protein sequence, read N- to C-terminus: UDP-N-acetylmuramoylalanine--D-glutamate ligase (453 aa).

Residue 120–126 (GSNGKST) participates in ATP binding.

It belongs to the MurCDEF family.

It is found in the cytoplasm. It catalyses the reaction UDP-N-acetyl-alpha-D-muramoyl-L-alanine + D-glutamate + ATP = UDP-N-acetyl-alpha-D-muramoyl-L-alanyl-D-glutamate + ADP + phosphate + H(+). The protein operates within cell wall biogenesis; peptidoglycan biosynthesis. Cell wall formation. Catalyzes the addition of glutamate to the nucleotide precursor UDP-N-acetylmuramoyl-L-alanine (UMA). In Teredinibacter turnerae (strain ATCC 39867 / T7901), this protein is UDP-N-acetylmuramoylalanine--D-glutamate ligase.